The sequence spans 473 residues: MPQTPPFSAMFDSSGYNRNLYQSAEDSCGGLYYHDNNLLSGSLEALIQHLVPNVDYYPDRTYIFTFLLSSRLFMHPYELMAKVCHLCVEHQRLSDPDSDKNQMRKIAPKILQLLTEWTETFPYDFRDERMMRNLKDLAHRIASGEEQTYRKNVQQMMQCLIRKLAALSQYEEVLAKISSTSTDRLTVLKTKPQSIQRDIITVCNDPYTLAQQLTHIELERLNYIGPEEFVQAFVQKDPLDNDKSCYSERKKTRNLEAYVEWFNRLSYLVATEICMPVKKKHRARMIEYFIDVARECFNIGNFNSLMAIISGMNMSPVSRLKKTWAKVKTAKFDILEHQMDPSSNFYNYRTALRGAAQRSLTAHSSREKIVIPFFSLLIKDIYFLNEGCANRLPNGHVNFEKFWELAKQVSEFMTWKQVECPFERDRKILQYLLTVPVFSEDALYLASYESEGPENHIEKDRWKSLRSSLLGRV.

The N-terminal Ras-GEF domain maps to 34–164; that stretch reads HDNNLLSGSL…QMMQCLIRKL (131 aa). The 249-residue stretch at 204 to 452 folds into the Ras-GEF domain; it reads NDPYTLAQQL…LYLASYESEG (249 aa).

Interacts with Ras family proteins. Interacts with CCDC124 during cytokinesis.

It localises to the early endosome. The protein resides in the late endosome. Its subcellular location is the midbody. Its function is as follows. Guanine nucleotide exchange factor (GEF) with specificity for RAP2A, it doesn't seems to activate other Ras family proteins (in vitro). The chain is Ras-GEF domain-containing family member 1B (RASGEF1B) from Homo sapiens (Human).